A 395-amino-acid polypeptide reads, in one-letter code: Cytoplasmic tRNA 2-thiolation protein 1 (395 aa).

Positions threonine 297 to lysine 309 are enriched in basic residues. A disordered region spans residues threonine 297–asparagine 335.

Belongs to the TtcA family. CTU1/NCS6/ATPBD3 subfamily.

It is found in the cytoplasm. It participates in tRNA modification; 5-methoxycarbonylmethyl-2-thiouridine-tRNA biosynthesis. Plays a central role in 2-thiolation of mcm(5)S(2)U at tRNA wobble positions of tRNA(Lys), tRNA(Glu) and tRNA(Gln). Directly binds tRNAs and probably acts by catalyzing adenylation of tRNAs, an intermediate required for 2-thiolation. It is unclear whether it acts as a sulfurtransferase that transfers sulfur from thiocarboxylated URM1 onto the uridine of tRNAs at wobble position. Prior mcm(5) tRNA modification by the elongator complex is required for 2-thiolation. May also be involved in protein urmylation. This is Cytoplasmic tRNA 2-thiolation protein 1 from Candida albicans (strain SC5314 / ATCC MYA-2876) (Yeast).